Consider the following 78-residue polypeptide: Exodeoxyribonuclease 7 small subunit (78 aa).

This sequence belongs to the XseB family. In terms of assembly, heterooligomer composed of large and small subunits.

The protein resides in the cytoplasm. The enzyme catalyses Exonucleolytic cleavage in either 5'- to 3'- or 3'- to 5'-direction to yield nucleoside 5'-phosphates.. Functionally, bidirectionally degrades single-stranded DNA into large acid-insoluble oligonucleotides, which are then degraded further into small acid-soluble oligonucleotides. This is Exodeoxyribonuclease 7 small subunit from Synechococcus sp. (strain JA-3-3Ab) (Cyanobacteria bacterium Yellowstone A-Prime).